Reading from the N-terminus, the 366-residue chain is Ribosome-binding ATPase YchF (366 aa).

The OBG-type G domain occupies 3-259; it reads LTAGIVGLPN…LEGEEKQMFL (257 aa). An ATP-binding site is contributed by 12 to 17; that stretch reads NVGKST. Residues Ser16 and Thr36 each coordinate Mg(2+). The region spanning 281–364 is the TGS domain; that stretch reads GLATYFTAGE…QDGDVIHFRF (84 aa).

The protein belongs to the TRAFAC class OBG-HflX-like GTPase superfamily. OBG GTPase family. YchF/OLA1 subfamily. Requires Mg(2+) as cofactor.

ATPase that binds to both the 70S ribosome and the 50S ribosomal subunit in a nucleotide-independent manner. This chain is Ribosome-binding ATPase YchF, found in Bacillus subtilis (strain 168).